A 420-amino-acid chain; its full sequence is MLTKAPRGTKDITPKEAYKWRYVENKFREICALYGYEEMVTPIFEHTELFKRSVGDTTDIVQKEMYSFKDKGDREITLKPEGTAGVVRAFIENKLYADTQPTKLFYVTPCFRYERPQAGRQRQFHQFGIEALGSDTPSMDAEIIALAVQFFNEVGLNDLVVSINSVGCPVCRKEYNALLKEYLDSKADILCDTCNERREKNPMRVIDCKNPTCKENIKDIPFIADHLCDDCKSHFDKLQEYLKEMNINFVIDKTIVRGLDYYRKTAFEIISNDIGAQSTVCGGGRYDGLVEQLGGPKGISGIGFGLGIERLLLTLEGNGIEIENPQSTDIFIVTIGEEANTRSFKLLKDLRQNHISADKDHIERSVKAQFKYSDKINSKFTIVIGDDELKNDTATLKNMKTSEQTTVKLSTLVEELKQKL.

The protein belongs to the class-II aminoacyl-tRNA synthetase family. As to quaternary structure, homodimer.

It is found in the cytoplasm. The catalysed reaction is tRNA(His) + L-histidine + ATP = L-histidyl-tRNA(His) + AMP + diphosphate + H(+). This is Histidine--tRNA ligase from Clostridioides difficile (strain 630) (Peptoclostridium difficile).